The chain runs to 84 residues: MVVIRLSRGGSKARPFYNIVAADKRVRRDGSFIERLGFYNPNARGGEEGLRVALDRVNYWKGVGAQASETAERLIKQATQKTAA.

Belongs to the bacterial ribosomal protein bS16 family.

The chain is Small ribosomal subunit protein bS16 from Delftia acidovorans (strain DSM 14801 / SPH-1).